We begin with the raw amino-acid sequence, 318 residues long: GPN-loop GTPase 2 (318 aa).

29-34 lines the GTP pocket; sequence GSGKST. A Gly-Pro-Asn (GPN)-loop; involved in dimer interface motif is present at residues 85–87; it reads GPN. 187–190 contributes to the GTP binding site; sequence SKMD.

The protein belongs to the GPN-loop GTPase family. As to quaternary structure, heterodimers with gpn1 or gpn3. Binds to RNA polymerase II (RNAPII).

Functionally, small GTPase required for proper localization of RNA polymerase II and III (RNAPII and RNAPIII). May act at an RNAP assembly step prior to nuclear import. The chain is GPN-loop GTPase 2 from Xenopus laevis (African clawed frog).